Reading from the N-terminus, the 423-residue chain is Putative competence-damage inducible protein (423 aa).

This sequence belongs to the CinA family.

The chain is Putative competence-damage inducible protein from Streptococcus equi subsp. zooepidemicus (strain H70).